The sequence spans 227 residues: ATP synthase F(0) complex subunit a (227 aa).

6 helical membrane-spanning segments follow: residues 12–32 (PYLMGMPLILPSLLLPTLLFP), 69–89 (WALLLTSLILLLLSINLMGLL), 98–118 (QLSMNMALAFPLWLATLLIGL), 139–159 (IPILIMIETTSLLIRPLALGV), 170–190 (LLIQLISTATIALLPTMPSIS), and 196–216 (ILLLLTILEVAVAMIQAYVFV).

The protein belongs to the ATPase A chain family. In terms of assembly, component of the ATP synthase complex composed at least of ATP5F1A/subunit alpha, ATP5F1B/subunit beta, ATP5MC1/subunit c (homooctomer), MT-ATP6/subunit a, MT-ATP8/subunit 8, ATP5ME/subunit e, ATP5MF/subunit f, ATP5MG/subunit g, ATP5MK/subunit k, ATP5MJ/subunit j, ATP5F1C/subunit gamma, ATP5F1D/subunit delta, ATP5F1E/subunit epsilon, ATP5PF/subunit F6, ATP5PB/subunit b, ATP5PD/subunit d, ATP5PO/subunit OSCP. ATP synthase complex consists of a soluble F(1) head domain (subunits alpha(3) and beta(3)) - the catalytic core - and a membrane F(0) domain - the membrane proton channel (subunits c, a, 8, e, f, g, k and j). These two domains are linked by a central stalk (subunits gamma, delta, and epsilon) rotating inside the F1 region and a stationary peripheral stalk (subunits F6, b, d, and OSCP). Interacts with DNAJC30; interaction is direct.

Its subcellular location is the mitochondrion inner membrane. The catalysed reaction is H(+)(in) = H(+)(out). Subunit a, of the mitochondrial membrane ATP synthase complex (F(1)F(0) ATP synthase or Complex V) that produces ATP from ADP in the presence of a proton gradient across the membrane which is generated by electron transport complexes of the respiratory chain. ATP synthase complex consist of a soluble F(1) head domain - the catalytic core - and a membrane F(1) domain - the membrane proton channel. These two domains are linked by a central stalk rotating inside the F(1) region and a stationary peripheral stalk. During catalysis, ATP synthesis in the catalytic domain of F(1) is coupled via a rotary mechanism of the central stalk subunits to proton translocation. With the subunit c (ATP5MC1), forms the proton-conducting channel in the F(0) domain, that contains two crucial half-channels (inlet and outlet) that facilitate proton movement from the mitochondrial intermembrane space (IMS) into the matrix. Protons are taken up via the inlet half-channel and released through the outlet half-channel, following a Grotthuss mechanism. The chain is ATP synthase F(0) complex subunit a from Coturnix japonica (Japanese quail).